The sequence spans 136 residues: UPF0102 protein BBta_0181 (136 aa).

This sequence belongs to the UPF0102 family.

The chain is UPF0102 protein BBta_0181 from Bradyrhizobium sp. (strain BTAi1 / ATCC BAA-1182).